The sequence spans 333 residues: Holliday junction branch migration complex subunit RuvB (333 aa).

Residues M1–Y182 are large ATPase domain (RuvB-L). Residues I21, R22, G63, K66, T67, T68, E129–Y131, R172, Y182, and R219 each bind ATP. T67 serves as a coordination point for Mg(2+). The segment at N183 to Q253 is small ATPAse domain (RuvB-S). The tract at residues R256–K333 is head domain (RuvB-H). 2 residues coordinate DNA: R311 and R316.

It belongs to the RuvB family. As to quaternary structure, homohexamer. Forms an RuvA(8)-RuvB(12)-Holliday junction (HJ) complex. HJ DNA is sandwiched between 2 RuvA tetramers; dsDNA enters through RuvA and exits via RuvB. An RuvB hexamer assembles on each DNA strand where it exits the tetramer. Each RuvB hexamer is contacted by two RuvA subunits (via domain III) on 2 adjacent RuvB subunits; this complex drives branch migration. In the full resolvosome a probable DNA-RuvA(4)-RuvB(12)-RuvC(2) complex forms which resolves the HJ.

It localises to the cytoplasm. It catalyses the reaction ATP + H2O = ADP + phosphate + H(+). Its function is as follows. The RuvA-RuvB-RuvC complex processes Holliday junction (HJ) DNA during genetic recombination and DNA repair, while the RuvA-RuvB complex plays an important role in the rescue of blocked DNA replication forks via replication fork reversal (RFR). RuvA specifically binds to HJ cruciform DNA, conferring on it an open structure. The RuvB hexamer acts as an ATP-dependent pump, pulling dsDNA into and through the RuvAB complex. RuvB forms 2 homohexamers on either side of HJ DNA bound by 1 or 2 RuvA tetramers; 4 subunits per hexamer contact DNA at a time. Coordinated motions by a converter formed by DNA-disengaged RuvB subunits stimulates ATP hydrolysis and nucleotide exchange. Immobilization of the converter enables RuvB to convert the ATP-contained energy into a lever motion, pulling 2 nucleotides of DNA out of the RuvA tetramer per ATP hydrolyzed, thus driving DNA branch migration. The RuvB motors rotate together with the DNA substrate, which together with the progressing nucleotide cycle form the mechanistic basis for DNA recombination by continuous HJ branch migration. Branch migration allows RuvC to scan DNA until it finds its consensus sequence, where it cleaves and resolves cruciform DNA. The chain is Holliday junction branch migration complex subunit RuvB from Halalkalibacterium halodurans (strain ATCC BAA-125 / DSM 18197 / FERM 7344 / JCM 9153 / C-125) (Bacillus halodurans).